We begin with the raw amino-acid sequence, 295 residues long: Pyridoxal 5'-phosphate synthase subunit PdxS (295 aa).

Asp25 lines the D-ribose 5-phosphate pocket. The active-site Schiff-base intermediate with D-ribose 5-phosphate is the Lys82. Residue Gly154 coordinates D-ribose 5-phosphate. Arg166 provides a ligand contact to D-glyceraldehyde 3-phosphate. D-ribose 5-phosphate contacts are provided by residues Gly215 and 236-237; that span reads GS.

This sequence belongs to the PdxS/SNZ family. In the presence of PdxT, forms a dodecamer of heterodimers.

It catalyses the reaction aldehydo-D-ribose 5-phosphate + D-glyceraldehyde 3-phosphate + L-glutamine = pyridoxal 5'-phosphate + L-glutamate + phosphate + 3 H2O + H(+). It participates in cofactor biosynthesis; pyridoxal 5'-phosphate biosynthesis. Functionally, catalyzes the formation of pyridoxal 5'-phosphate from ribose 5-phosphate (RBP), glyceraldehyde 3-phosphate (G3P) and ammonia. The ammonia is provided by the PdxT subunit. Can also use ribulose 5-phosphate and dihydroxyacetone phosphate as substrates, resulting from enzyme-catalyzed isomerization of RBP and G3P, respectively. In Bacillus cereus (strain B4264), this protein is Pyridoxal 5'-phosphate synthase subunit PdxS.